An 89-amino-acid polypeptide reads, in one-letter code: Small ribosomal subunit protein uS14A (89 aa).

Belongs to the universal ribosomal protein uS14 family. In terms of assembly, part of the 30S ribosomal subunit. Contacts proteins S3 and S10.

Binds 16S rRNA, required for the assembly of 30S particles and may also be responsible for determining the conformation of the 16S rRNA at the A site. This is Small ribosomal subunit protein uS14A from Listeria monocytogenes serovar 1/2a (strain ATCC BAA-679 / EGD-e).